Reading from the N-terminus, the 486-residue chain is Serine/threonine-protein kinase 33 (486 aa).

A disordered region spans residues 39–100 (VVEMSQTSST…WGRGNFTEGK (62 aa)). The span at 41–53 (EMSQTSSTGSSEF) shows a compositional bias: polar residues. The segment covering 57–66 (PEKRKEKGAS) has biased composition (basic and acidic residues). Over residues 68-80 (DVTSGKDSPSKSS) the composition is skewed to polar residues. One can recognise a Protein kinase domain in the interval 116-381 (YTFGRILGQG…AKELLDNQWL (266 aa)). Residues 122 to 130 (LGQGSFGMV) and Lys145 each bind ATP. Asp238 (proton acceptor) is an active-site residue. Positions 402–451 (KNNPESDEESTTDQRDSRSGQEESKVYQPSRNVPDVSNSSDEEEGKQVGR) are disordered. Ser407 is subject to Phosphoserine. Positions 413–426 (TDQRDSRSGQEESK) are enriched in basic and acidic residues. The segment covering 428-440 (YQPSRNVPDVSNS) has biased composition (polar residues).

It belongs to the protein kinase superfamily. CAMK Ser/Thr protein kinase family. CaMK subfamily. In terms of assembly, interacts with vimentin/VIM. Post-translationally, autophosphorylated.

The protein localises to the cytoplasm. The protein resides in the perinuclear region. The catalysed reaction is L-seryl-[protein] + ATP = O-phospho-L-seryl-[protein] + ADP + H(+). It catalyses the reaction L-threonyl-[protein] + ATP = O-phospho-L-threonyl-[protein] + ADP + H(+). In terms of biological role, serine/threonine protein kinase which phosphorylates vimentin/VIM. Therefore may play a specific role in the dynamic behavior of the intermediate filament cytoskeleton. The chain is Serine/threonine-protein kinase 33 (STK33) from Bos taurus (Bovine).